The chain runs to 610 residues: UvrABC system protein C (610 aa).

In terms of domain architecture, GIY-YIG spans H13–V91. Residues G201–V236 enclose the UVR domain.

This sequence belongs to the UvrC family. In terms of assembly, interacts with UvrB in an incision complex.

It is found in the cytoplasm. The UvrABC repair system catalyzes the recognition and processing of DNA lesions. UvrC both incises the 5' and 3' sides of the lesion. The N-terminal half is responsible for the 3' incision and the C-terminal half is responsible for the 5' incision. The chain is UvrABC system protein C from Actinobacillus pleuropneumoniae serotype 3 (strain JL03).